Consider the following 655-residue polypeptide: Probable alpha-galactosidase D (655 aa).

The first 16 residues, 1–16 (MLPKIFYLSLLPAALG), serve as a signal peptide directing secretion. Asparagine 47 and asparagine 91 each carry an N-linked (GlcNAc...) asparagine glycan. A disulfide bond links cysteine 124 and cysteine 155. The active-site Nucleophile is the aspartate 153. Asparagine 180 and asparagine 189 each carry an N-linked (GlcNAc...) asparagine glycan. 198-202 (EWGID) lines the substrate pocket. Aspartate 220 serves as the catalytic Proton donor. N-linked (GlcNAc...) asparagine glycosylation is found at asparagine 349, asparagine 436, asparagine 458, asparagine 503, asparagine 537, asparagine 541, and asparagine 580.

It belongs to the glycosyl hydrolase 27 family.

The protein resides in the secreted. The enzyme catalyses Hydrolysis of terminal, non-reducing alpha-D-galactose residues in alpha-D-galactosides, including galactose oligosaccharides, galactomannans and galactolipids.. Its function is as follows. Hydrolyzes a variety of simple alpha-D-galactoside as well as more complex molecules such as oligosaccharides and polysaccharides. The polypeptide is Probable alpha-galactosidase D (aglD) (Aspergillus flavus (strain ATCC 200026 / FGSC A1120 / IAM 13836 / NRRL 3357 / JCM 12722 / SRRC 167)).